Reading from the N-terminus, the 473-residue chain is Photosystem II CP43 reaction center protein (473 aa).

Residues 1-14 (MKTLYSPRRYYPVE) constitute a propeptide that is removed on maturation. An N-acetylthreonine modification is found at threonine 15. Threonine 15 is modified (phosphothreonine). 5 consecutive transmembrane segments (helical) span residues 69–93 (LFEV…PHLA), 134–155 (IIGP…KDKN), 178–200 (KAVW…RVIT), 255–275 (KPFA…LSYS), and 291–312 (WFNN…ASQA). [CaMn4O5] cluster is bound at residue glutamate 367. A helical transmembrane segment spans residues 447 to 471 (RARAAAAGFEKGIERETEPVLFMSP).

This sequence belongs to the PsbB/PsbC family. PsbC subfamily. As to quaternary structure, PSII is composed of 1 copy each of membrane proteins PsbA, PsbB, PsbC, PsbD, PsbE, PsbF, PsbH, PsbI, PsbJ, PsbK, PsbL, PsbM, PsbT, PsbX, PsbY, PsbZ, Psb30/Ycf12, at least 3 peripheral proteins of the oxygen-evolving complex and a large number of cofactors. It forms dimeric complexes. Requires Binds multiple chlorophylls and provides some of the ligands for the Ca-4Mn-5O cluster of the oxygen-evolving complex. It may also provide a ligand for a Cl- that is required for oxygen evolution. PSII binds additional chlorophylls, carotenoids and specific lipids. as cofactor.

The protein localises to the plastid. The protein resides in the chloroplast thylakoid membrane. One of the components of the core complex of photosystem II (PSII). It binds chlorophyll and helps catalyze the primary light-induced photochemical processes of PSII. PSII is a light-driven water:plastoquinone oxidoreductase, using light energy to abstract electrons from H(2)O, generating O(2) and a proton gradient subsequently used for ATP formation. The sequence is that of Photosystem II CP43 reaction center protein from Chaetosphaeridium globosum (Charophycean green alga).